The primary structure comprises 439 residues: GTPase Der (439 aa).

EngA-type G domains lie at 4 to 169 (AMVA…PEND) and 177 to 352 (IKIA…EEYN). GTP contacts are provided by residues 10–17 (GRPNVGKS), 57–61 (DTGGL), 120–123 (NKVD), 183–190 (GRPNVGKS), 230–234 (DTAGI), and 295–298 (NKWD). The 85-residue stretch at 353–437 (KRITTGLLNN…PIVISTKKRG (85 aa)) folds into the KH-like domain.

This sequence belongs to the TRAFAC class TrmE-Era-EngA-EngB-Septin-like GTPase superfamily. EngA (Der) GTPase family. Associates with the 50S ribosomal subunit.

Its function is as follows. GTPase that plays an essential role in the late steps of ribosome biogenesis. This Caldanaerobacter subterraneus subsp. tengcongensis (strain DSM 15242 / JCM 11007 / NBRC 100824 / MB4) (Thermoanaerobacter tengcongensis) protein is GTPase Der.